A 422-amino-acid chain; its full sequence is Zinc finger and BTB domain-containing protein 42 (422 aa).

The BTB domain maps to Cys-24–Ser-92. Disordered regions lie at residues Lys-121–Cys-141, Ala-166–Leu-188, and Leu-207–Gly-256. A compositionally biased stretch (pro residues) spans His-243–Pro-252. 4 C2H2-type zinc fingers span residues Cys-294–His-316, Pro-334–His-356, Tyr-362–His-384, and His-390–His-413.

This sequence belongs to the krueppel C2H2-type zinc-finger protein family. ZBTB18 subfamily. As to expression, expressed in skeletal muscle (at protein level).

Its subcellular location is the cytoplasm. The protein resides in the nucleus. It is found in the nucleoplasm. In terms of biological role, transcriptional repressor. Specifically binds DNA and probably acts by recruiting chromatin remodeling multiprotein complexes. This Homo sapiens (Human) protein is Zinc finger and BTB domain-containing protein 42 (ZBTB42).